We begin with the raw amino-acid sequence, 200 residues long: MMPFGKISQQLCGVKKLPWSCDSRYFWGWLNAVFNKVDYDRIRDVGPDRAASEWLLRCGAMVRYHGQERWQKDYNHLPTGPLDKYKIQAIDATDSCIMSIGFDHMEGLEHVEKIRLCKCHYIEDDCLLRLSQLENLQKTILEMEIISCGNITDKGIIALRHLRNLKYLLLSDLPGVREKENLVQAFKTALPSLELKLQLK.

A mitochondrion-targeting transit peptide spans Met1–Tyr25. The tract at residues Met1–Met61 is N-terminal domain. Gly59 contributes to the Mg(2+) binding site. LRR repeat units lie at residues Val62–Ile87, Gln88–Leu116, Cys117–Leu141, and Glu142–Leu173. Thr93 provides a ligand contact to Mg(2+).

The protein belongs to the ATP synthase subunit s family. In terms of assembly, homotetramer. Associates with ATP synthase.

It localises to the mitochondrion. Its subcellular location is the mitochondrion inner membrane. In terms of biological role, involved in regulation of mitochondrial membrane ATP synthase. Necessary for H(+) conduction of ATP synthase. Facilitates energy-driven catalysis of ATP synthesis by blocking a proton leak through an alternative proton exit pathway. This is ATP synthase subunit s, mitochondrial from Homo sapiens (Human).